We begin with the raw amino-acid sequence, 369 residues long: Anhydro-N-acetylmuramic acid kinase (369 aa).

12–19 lines the ATP pocket; sequence GTSLDGVD.

It belongs to the anhydro-N-acetylmuramic acid kinase family.

The catalysed reaction is 1,6-anhydro-N-acetyl-beta-muramate + ATP + H2O = N-acetyl-D-muramate 6-phosphate + ADP + H(+). The protein operates within amino-sugar metabolism; 1,6-anhydro-N-acetylmuramate degradation. Its pathway is cell wall biogenesis; peptidoglycan recycling. Functionally, catalyzes the specific phosphorylation of 1,6-anhydro-N-acetylmuramic acid (anhMurNAc) with the simultaneous cleavage of the 1,6-anhydro ring, generating MurNAc-6-P. Is required for the utilization of anhMurNAc either imported from the medium or derived from its own cell wall murein, and thus plays a role in cell wall recycling. This chain is Anhydro-N-acetylmuramic acid kinase, found in Escherichia coli O139:H28 (strain E24377A / ETEC).